The sequence spans 159 residues: RNA pyrophosphohydrolase (159 aa).

Residues 6–149 (GFRPNVGIIL…KREVYRRALK (144 aa)) enclose the Nudix hydrolase domain. The Nudix box motif lies at 38–59 (GGINPDETPEDALYRELNEEVG).

Belongs to the Nudix hydrolase family. RppH subfamily. A divalent metal cation is required as a cofactor.

Accelerates the degradation of transcripts by removing pyrophosphate from the 5'-end of triphosphorylated RNA, leading to a more labile monophosphorylated state that can stimulate subsequent ribonuclease cleavage. This is RNA pyrophosphohydrolase from Pseudomonas putida (strain ATCC 700007 / DSM 6899 / JCM 31910 / BCRC 17059 / LMG 24140 / F1).